The following is a 65-amino-acid chain: Small ribosomal subunit protein eS17 (65 aa).

It belongs to the eukaryotic ribosomal protein eS17 family.

The polypeptide is Small ribosomal subunit protein eS17 (Archaeoglobus fulgidus (strain ATCC 49558 / DSM 4304 / JCM 9628 / NBRC 100126 / VC-16)).